The primary structure comprises 514 residues: Cilia- and flagella-associated protein 53 (514 aa).

Residues Glu207–Leu429 adopt a coiled-coil conformation.

The protein belongs to the CFAP53 family. Microtubule inner protein component of sperm flagellar doublet microtubules. Interacts with PIERCE1 and PIERCE2; the interactions link outer dynein arms docking complex (ODA-DC) to the internal microtubule inner proteins (MIP) in cilium axoneme. Interacts with CCDC38. Interacts with CCDC42 and IFT88. Interacts with centriolar satellite proteins PIBF1/CEP90 and PCM1. Interacts with dyneins DNAIC1, DNAIC2 AND DNAH11 and with ODA-DC component ODAD4/TTC25. In terms of tissue distribution, expressed in trachea multiciliated cells.

The protein resides in the cytoplasm. It localises to the cytoskeleton. Its subcellular location is the cilium axoneme. It is found in the flagellum axoneme. The protein localises to the microtubule organizing center. The protein resides in the centrosome. It localises to the centriolar satellite. Its subcellular location is the spindle pole. In terms of biological role, microtubule inner protein (MIP) part of the dynein-decorated doublet microtubules (DMTs) in cilia axoneme, which is required for motile cilia beating. Regulates motility patterns of both 9+0 and 9+2 motile cilia through differential localization and recruitment of axonemal dynein components. Required for centriolar satellite integrity and non-motile cilium assembly. Required for motile cilium formation. Through its role in beating of primary cilia, involved in the establishment of organ laterality during embryogenesis. Required for sperm flagellum biogenesis and is essential for male fertility. The polypeptide is Cilia- and flagella-associated protein 53 (CFAP53) (Bos taurus (Bovine)).